Here is a 98-residue protein sequence, read N- to C-terminus: Large ribosomal subunit protein uL23 (98 aa).

It belongs to the universal ribosomal protein uL23 family. In terms of assembly, part of the 50S ribosomal subunit. Contacts protein L29, and trigger factor when it is bound to the ribosome.

One of the early assembly proteins it binds 23S rRNA. One of the proteins that surrounds the polypeptide exit tunnel on the outside of the ribosome. Forms the main docking site for trigger factor binding to the ribosome. This Frankia casuarinae (strain DSM 45818 / CECT 9043 / HFP020203 / CcI3) protein is Large ribosomal subunit protein uL23.